Consider the following 41-residue polypeptide: Disintegrin obtustatin (41 aa).

Disulfide bonds link Cys-1/Cys-10, Cys-6/Cys-29, Cys-7/Cys-34, and Cys-19/Cys-36. In terms of domain architecture, Disintegrin spans 1 to 41; it reads CTTGPCCRQCKLKPAGTTCWKTSLTSHYCTGKSCDCPLYPG. A Cell attachment site; atypical (KTS) motif is present at residues 21–23; that stretch reads KTS.

Belongs to the disintegrin family. Short disintegrin subfamily. As to quaternary structure, monomer. Expressed by the venom gland.

It localises to the secreted. Functionally, is a potent and selective inhibitor of alpha-1/beta-1 (ITGA1/ITGB1) integrin. It blocks the adhesion of alpha-1/beta-1-expressing K562 cells to immobilized collagens IV and I with IC(50) of 2 and 0.5 nM, respectively. Potently inhibits angiogenesis in chicken and in mouse model and reduces tumor development by half. Is 25-fold less potent than viperistatin. The polypeptide is Disintegrin obtustatin (Macrovipera lebetina obtusa (Levant blunt-nosed viper)).